The following is a 371-amino-acid chain: MSHEKSFLVSGDNYPPPNPGYPGGPQPPMPPYAQPPYPGAPYPQPPFQPSPYGQPGYPHGPSPYPQGGYPQGPYPQGGYPQGPYPQEGYPQGPYPQGGYPQGPYPQSPFPPNPYGQPQVFPGQDPDSPQHGNYQEEGPPSYYDNQDFPATNWDDKSIRQAFIRKVFLVLTLQLSVTLSTVSVFTFVAEVKGFVRENVWTYYVSYAVFFISLIVLSCCGDFRRKHPWNLVALSVLTASLSYMVGMIASFYNTEAVIMAVGITTAVCFTVVIFSMQTRYDFTSCMGVLLVSMVVLFIFAILCIFIRNRILEIVYASLGALLFTCFLAVDTQLLLGNKQLSLSPEEYVFAALNLYTDIINIFLYILTIIGRAKE.

Residues 1-145 (MSHEKSFLVS…EGPPSYYDNQ (145 aa)) are disordered. The span at 14 to 49 (YPPPNPGYPGGPQPPMPPYAQPPYPGAPYPQPPFQP) shows a compositional bias: pro residues. Low complexity predominate over residues 84 to 98 (YPQEGYPQGPYPQGG). The span at 102–114 (GPYPQSPFPPNPY) shows a compositional bias: pro residues. 7 helical membrane passes run 165 to 185 (VFLV…VFTF), 197 to 217 (VWTY…LSCC), 228 to 248 (LVAL…IASF), 253 to 273 (AVIM…IFSM), 283 to 303 (MGVL…CIFI), 307 to 327 (ILEI…LAVD), and 346 to 366 (FAAL…LTII).

This sequence belongs to the BI1 family. LFG subfamily.

Its subcellular location is the membrane. Potential apoptotic regulator. This is Protein lifeguard 1 (GRINA) from Homo sapiens (Human).